Consider the following 865-residue polypeptide: Xylosyltransferase 2 (865 aa).

At 1-15 the chain is on the cytoplasmic side; it reads MVASARVQKLVRRYK. The chain crosses the membrane as a helical; Signal-anchor for type II membrane protein span at residues 16-36; it reads LAIATALAILLLQGLVVWSFS. Topologically, residues 37 to 865 are lumenal; sequence GLEEDEPGEK…GPVKADGRLR (829 aa). Residues 39–155 are disordered; sequence EEDEPGEKGR…SVEGAPQPTD (117 aa). Basic and acidic residues predominate over residues 53 to 65; sequence RPLDPGEGSKDTD. Basic residues predominate over residues 73 to 82; sequence SAGRRHGRWR. Asn122 carries an N-linked (GlcNAc...) asparagine glycan. 4 disulfides stabilise this stretch: Cys162-Cys190, Cys206-Cys448, Cys467-Cys480, and Cys469-Cys478. UDP-alpha-D-xylose-binding positions include Val239, Asp267, and 296-298; that span reads TIW. Asn327 carries N-linked (GlcNAc...) asparagine glycosylation. Position 400 to 401 (400 to 401) interacts with UDP-alpha-D-xylose; sequence DW. Residues Ser481 and 504–505 contribute to the UDP-alpha-D-xylose site; that span reads RK. 2 disulfides stabilise this stretch: Cys581–Cys833 and Cys826–Cys839. A glycan (N-linked (GlcNAc...) asparagine) is linked at Asn683.

It belongs to the glycosyltransferase 14 family. XylT subfamily. As to quaternary structure, monomer. It depends on Mg(2+) as a cofactor. Mn(2+) serves as cofactor. Post-translationally, contains disulfide bonds. As to expression, detected in brain, liver, lung, kidney, heart, spleen and testis, and at lower levels in skeletal muscle.

The protein localises to the golgi apparatus membrane. It is found in the secreted. It carries out the reaction UDP-alpha-D-xylose + L-seryl-[protein] = 3-O-(beta-D-xylosyl)-L-seryl-[protein] + UDP + H(+). Its pathway is glycan metabolism; chondroitin sulfate biosynthesis. It participates in glycan metabolism; heparan sulfate biosynthesis. Functionally, catalyzes the first step in the biosynthesis of chondroitin sulfate, heparan sulfate and dermatan sulfate proteoglycans, such as DCN. Transfers D-xylose from UDP-D-xylose to specific serine residues of the core protein. This chain is Xylosyltransferase 2 (Xylt2), found in Mus musculus (Mouse).